Consider the following 263-residue polypeptide: 3-methyl-2-oxobutanoate hydroxymethyltransferase (263 aa).

D45 and D84 together coordinate Mg(2+). Residues 45–46, D84, and K112 contribute to the 3-methyl-2-oxobutanoate site; that span reads DS. E114 is a binding site for Mg(2+). E181 acts as the Proton acceptor in catalysis.

It belongs to the PanB family. Homodecamer; pentamer of dimers. Requires Mg(2+) as cofactor.

Its subcellular location is the cytoplasm. It carries out the reaction 3-methyl-2-oxobutanoate + (6R)-5,10-methylene-5,6,7,8-tetrahydrofolate + H2O = 2-dehydropantoate + (6S)-5,6,7,8-tetrahydrofolate. It participates in cofactor biosynthesis; (R)-pantothenate biosynthesis; (R)-pantoate from 3-methyl-2-oxobutanoate: step 1/2. Functionally, catalyzes the reversible reaction in which hydroxymethyl group from 5,10-methylenetetrahydrofolate is transferred onto alpha-ketoisovalerate to form ketopantoate. This chain is 3-methyl-2-oxobutanoate hydroxymethyltransferase, found in Photorhabdus laumondii subsp. laumondii (strain DSM 15139 / CIP 105565 / TT01) (Photorhabdus luminescens subsp. laumondii).